The chain runs to 207 residues: Ribonuclease HII (207 aa).

An RNase H type-2 domain is found at 18–207 (TYLSGSDEAG…PIKKISKETS (190 aa)). A divalent metal cation-binding residues include Asp24, Glu25, and Asp116.

The protein belongs to the RNase HII family. It depends on Mn(2+) as a cofactor. The cofactor is Mg(2+).

The protein localises to the cytoplasm. It catalyses the reaction Endonucleolytic cleavage to 5'-phosphomonoester.. In terms of biological role, endonuclease that specifically degrades the RNA of RNA-DNA hybrids. The chain is Ribonuclease HII from Mycoplasma mycoides subsp. mycoides SC (strain CCUG 32753 / NCTC 10114 / PG1).